Consider the following 644-residue polypeptide: Keratin, type II cytoskeletal 1 (644 aa).

Positions 2–179 (SRQFSSRSGY…DPEIQKVKSR (178 aa)) are head. Arg-12 is modified (omega-N-methylarginine). Ser-18 and Ser-21 each carry phosphoserine. Positions 22–38 (AGIINYQRRTTSSSTRR) are enriched in low complexity. Residues 22–47 (AGIINYQRRTTSSSTRRSGGGGGRFS) are disordered. Arg-45 is modified (omega-N-methylarginine). Ser-66 carries the phosphoserine modification. Omega-N-methylarginine is present on Arg-82. Residues 180 to 215 (EREQIKSLNNQFASFIDKVRFLEQQNQVLQTKWELL) are coil 1A. An IF rod domain is found at 180–493 (EREQIKSLNN…TLLEGEESRM (314 aa)). Residues 216–234 (QQVDTSTRTHNLEPYFESF) are linker 1. The tract at residues 235–326 (INNLRRRVDQ…ALYQAELSQM (92 aa)) is coil 1B. N6,N6-dimethyllysine is present on Lys-276. A linker 12 region spans residues 327 to 350 (QTQISETNVILSMDNNRSLDLDSI). Residue Ser-344 is modified to Phosphoserine. The interval 351-489 (IAEVKAQYED…ATYRTLLEGE (139 aa)) is coil 2. 2 disordered regions span residues 489 to 523 (EESRMSGECAPNVSVSVSTSHTTISGGGSRGGGGG) and 568 to 644 (SGGG…GVTR). The tract at residues 490–644 (ESRMSGECAP…VSTTYSGVTR (155 aa)) is tail. The segment covering 501–511 (VSVSVSTSHTT) has biased composition (low complexity). 2 stretches are compositionally biased toward gly residues: residues 513 to 523 (SGGGSRGGGGG) and 568 to 620 (SGGG…GSSS). 2 positions are modified to omega-N-methylarginine: Arg-518 and Arg-588. The span at 621–631 (GGVKSSGGSSS) shows a compositional bias: low complexity. A compositionally biased stretch (polar residues) spans 632–644 (VKFVSTTYSGVTR).

Belongs to the intermediate filament family. As to quaternary structure, heterotetramer of two type I and two type II keratins. Heterodimer with KRT10. Two heterodimers of KRT1 and KRT10 form a heterotetramer. Forms a heterodimer with KRT14; the interaction is more abundant in the absence of KRT5. Interacts with PLEC isoform 1C, when in a heterodimer with KRT10. Interacts with ITGB1 in the presence of RACK1 and SRC, and with RACK1. Interacts with C1QBP; the association represents a cell surface kininogen receptor. Interacts with EPPK1; interaction is dependent of higher-order structure of intermediate filament. In terms of processing, undergoes deimination of some arginine residues (citrullination). The source of this protein is neonatal foreskin. The 67-kDa type II keratins are expressed in terminally differentiating epidermis.

The protein resides in the cell membrane. It is found in the cytoplasm. In terms of biological role, may regulate the activity of kinases such as PKC and SRC via binding to integrin beta-1 (ITB1) and the receptor of activated protein C kinase 1 (RACK1). In complex with C1QBP is a high affinity receptor for kininogen-1/HMWK. This chain is Keratin, type II cytoskeletal 1 (KRT1), found in Homo sapiens (Human).